The following is a 366-amino-acid chain: Chorismate synthase (366 aa).

NADP(+)-binding residues include Arg-48 and Arg-54. Residues 125–127 (RSS), 242–243 (NA), Gly-287, 302–306 (KPTSS), and Arg-328 each bind FMN.

The protein belongs to the chorismate synthase family. As to quaternary structure, homotetramer. The cofactor is FMNH2.

It carries out the reaction 5-O-(1-carboxyvinyl)-3-phosphoshikimate = chorismate + phosphate. The protein operates within metabolic intermediate biosynthesis; chorismate biosynthesis; chorismate from D-erythrose 4-phosphate and phosphoenolpyruvate: step 7/7. Its function is as follows. Catalyzes the anti-1,4-elimination of the C-3 phosphate and the C-6 proR hydrogen from 5-enolpyruvylshikimate-3-phosphate (EPSP) to yield chorismate, which is the branch point compound that serves as the starting substrate for the three terminal pathways of aromatic amino acid biosynthesis. This reaction introduces a second double bond into the aromatic ring system. This chain is Chorismate synthase, found in Rhodospirillum rubrum (strain ATCC 11170 / ATH 1.1.1 / DSM 467 / LMG 4362 / NCIMB 8255 / S1).